Consider the following 218-residue polypeptide: MPGRQRRDGGNGPAGQNSNGPEGRDNRRGGGDRRGGGDRRDNAAEKNQLERVVAINRVSKVVKGGRRFSFTALVIVGDGNGLVGVGYGKAKEVPAAIQKGVEEARKGFFRVPMIGSTITHPVQGEAAAGVVMLRPASPGTGVIAGGAARAVLECAGIHDILAKSLGSDNAINVVHATVAALKQLQRPEEVAARRGLPLEDVAPAGMLRARAQAAGGAR.

The interval 1-45 (MPGRQRRDGGNGPAGQNSNGPEGRDNRRGGGDRRGGGDRRDNAAE) is disordered. The span at 22 to 45 (EGRDNRRGGGDRRGGGDRRDNAAE) shows a compositional bias: basic and acidic residues. The S5 DRBM domain maps to 48 to 111 (QLERVVAINR…EEARKGFFRV (64 aa)).

This sequence belongs to the universal ribosomal protein uS5 family. As to quaternary structure, part of the 30S ribosomal subunit. Contacts proteins S4 and S8.

Its function is as follows. With S4 and S12 plays an important role in translational accuracy. Located at the back of the 30S subunit body where it stabilizes the conformation of the head with respect to the body. The protein is Small ribosomal subunit protein uS5 of Nocardia farcinica (strain IFM 10152).